The following is a 554-amino-acid chain: 7-epi-sesquithujene synthase (554 aa).

Mg(2+) is bound by residues D308 and D312. The substrate site is built by D308, D312, R449, and N452. The DDXXD motif motif lies at D308 to D312. 3 residues coordinate Mg(2+): N452, S456, and E460.

This sequence belongs to the terpene synthase family. As to quaternary structure, monomer. Requires Mg(2+) as cofactor. Mn(2+) is required as a cofactor. Highly expressed in the husk. Detected in leaf sheaths and leaves.

The protein resides in the cytoplasm. It carries out the reaction (2E,6E)-farnesyl diphosphate = 7-epi-sesquithujene + diphosphate. It catalyses the reaction (2E,6E)-farnesyl diphosphate = (1S,5S,6R)-alpha-bergamotene + diphosphate. The enzyme catalyses (2E,6E)-farnesyl diphosphate = (E)-beta-farnesene + diphosphate. The catalysed reaction is (2E,6E)-farnesyl diphosphate = (S)-beta-bisabolene + diphosphate. It carries out the reaction (2Z,6E)-farnesyl diphosphate = (-)-beta-curcumene + diphosphate. It catalyses the reaction (2E,6E)-farnesyl diphosphate = gamma-curcumene + diphosphate. The enzyme catalyses (2E,6E)-farnesyl diphosphate = sesquisabinene A + diphosphate. Its pathway is secondary metabolite biosynthesis; terpenoid biosynthesis. Its function is as follows. Sesquiterpene synthase involved in the production after herbivore attack of a blend of volatiles that attracts natural enemies of herbivores. Converts farnesyl diphosphate to (S)-beta-bisabolene and 7-epi-sesquithujene, along with a mixture of more than 20 other minor sesquiterpene olefins. Can also act in vitro as a monoterpene synthase, converting geranyl diphosphate to (S)-(-)-limonene, beta-myrcene and 11 other monoterpenes. This is 7-epi-sesquithujene synthase from Zea mays (Maize).